The primary structure comprises 76 residues: Small ribosomal subunit protein uS17 (76 aa).

Belongs to the universal ribosomal protein uS17 family. In terms of assembly, part of the 30S ribosomal subunit.

One of the primary rRNA binding proteins, it binds specifically to the 5'-end of 16S ribosomal RNA. The sequence is that of Small ribosomal subunit protein uS17 from Ruegeria sp. (strain TM1040) (Silicibacter sp.).